A 125-amino-acid polypeptide reads, in one-letter code: Large ribosomal subunit protein bL17 (125 aa).

The protein belongs to the bacterial ribosomal protein bL17 family. As to quaternary structure, part of the 50S ribosomal subunit. Contacts protein L32.

The sequence is that of Large ribosomal subunit protein bL17 from Acinetobacter baumannii (strain AB0057).